A 394-amino-acid polypeptide reads, in one-letter code: 1-deoxy-D-xylulose 5-phosphate reductoisomerase (394 aa).

Thr6, Gly7, Ser8, Ile9, Ala32, and Asn124 together coordinate NADPH. Lys125 provides a ligand contact to 1-deoxy-D-xylulose 5-phosphate. Glu126 contacts NADPH. Asp148 is a binding site for Mn(2+). 4 residues coordinate 1-deoxy-D-xylulose 5-phosphate: Ser149, Glu150, Ser174, and His197. Residue Glu150 participates in Mn(2+) binding. NADPH is bound at residue Gly203. Positions 210, 215, 216, and 219 each coordinate 1-deoxy-D-xylulose 5-phosphate. Residue Glu219 coordinates Mn(2+).

Belongs to the DXR family. The cofactor is Mg(2+). Requires Mn(2+) as cofactor.

The catalysed reaction is 2-C-methyl-D-erythritol 4-phosphate + NADP(+) = 1-deoxy-D-xylulose 5-phosphate + NADPH + H(+). It functions in the pathway isoprenoid biosynthesis; isopentenyl diphosphate biosynthesis via DXP pathway; isopentenyl diphosphate from 1-deoxy-D-xylulose 5-phosphate: step 1/6. In terms of biological role, catalyzes the NADPH-dependent rearrangement and reduction of 1-deoxy-D-xylulose-5-phosphate (DXP) to 2-C-methyl-D-erythritol 4-phosphate (MEP). This Streptomyces avermitilis (strain ATCC 31267 / DSM 46492 / JCM 5070 / NBRC 14893 / NCIMB 12804 / NRRL 8165 / MA-4680) protein is 1-deoxy-D-xylulose 5-phosphate reductoisomerase.